The primary structure comprises 424 residues: Serine--tRNA ligase (424 aa).

An L-serine-binding site is contributed by 231 to 233 (TAE). 262–264 (RSE) contacts ATP. Residue Glu-285 coordinates L-serine. ATP is bound at residue 349–352 (EISS). Ser-385 provides a ligand contact to L-serine.

Belongs to the class-II aminoacyl-tRNA synthetase family. Type-1 seryl-tRNA synthetase subfamily. In terms of assembly, homodimer. The tRNA molecule binds across the dimer.

It localises to the cytoplasm. The catalysed reaction is tRNA(Ser) + L-serine + ATP = L-seryl-tRNA(Ser) + AMP + diphosphate + H(+). It catalyses the reaction tRNA(Sec) + L-serine + ATP = L-seryl-tRNA(Sec) + AMP + diphosphate + H(+). It participates in aminoacyl-tRNA biosynthesis; selenocysteinyl-tRNA(Sec) biosynthesis; L-seryl-tRNA(Sec) from L-serine and tRNA(Sec): step 1/1. Catalyzes the attachment of serine to tRNA(Ser). Is also able to aminoacylate tRNA(Sec) with serine, to form the misacylated tRNA L-seryl-tRNA(Sec), which will be further converted into selenocysteinyl-tRNA(Sec). The sequence is that of Serine--tRNA ligase from Bacillus cereus (strain ZK / E33L).